Reading from the N-terminus, the 167-residue chain is Putative 4-hydroxy-4-methyl-2-oxoglutarate aldolase (167 aa).

Substrate contacts are provided by residues 81–84 (GDII) and arginine 103. Aspartate 104 is an a divalent metal cation binding site.

Belongs to the class II aldolase/RraA-like family. In terms of assembly, homotrimer. It depends on a divalent metal cation as a cofactor.

The enzyme catalyses 4-hydroxy-4-methyl-2-oxoglutarate = 2 pyruvate. It catalyses the reaction oxaloacetate + H(+) = pyruvate + CO2. Its function is as follows. Catalyzes the aldol cleavage of 4-hydroxy-4-methyl-2-oxoglutarate (HMG) into 2 molecules of pyruvate. Also contains a secondary oxaloacetate (OAA) decarboxylase activity due to the common pyruvate enolate transition state formed following C-C bond cleavage in the retro-aldol and decarboxylation reactions. This is Putative 4-hydroxy-4-methyl-2-oxoglutarate aldolase from Corynebacterium jeikeium (strain K411).